We begin with the raw amino-acid sequence, 538 residues long: MEIKEISVPQQGVVADYMNGKKEIQSCFDYMLTEDAFKQRLHDLREREFFRQDVVAHLLEYNTKLQAGESTLQNVKALGDENTYVVIAGQQAGLLTGPLYTIHKVISILKLAKEKEESLGVKVVPVFWIAGEDHDMDEINHTFLAKNKKMKKTIFYDRNPKKASASESELSVEDCRNWIEEIFKTYPETNFTKDVLKFVDDALEKSNTYVDFFAHLITKIFANSGLILVDSHHPELRKLEIPFFKRIISKYKEVQEGLRNQQEVIKELGYKPIIETKSHAVHIFMEIDNERVLLEEHQGKFVGKDGAHSFSYEELIEEMERNPARFSNNVVTRPLMQEYVFPTLAFIGGPGELAYWSELQQVFHTVGFQMPPVVPRLTITYVERCIATDLFDLQLRESDPFLNDVDKLRENWLSNQIEEPIDNHFEKAKKEIADIHTSLQQFVKKIEPGLSAFAGKNELKINEQIELLERMLKRNVEKKYEVQLNKFRRIQFALRPLGAPQERVWNVCYYLNQFGLDFVDRVMENPFSWDGKHHVIKL.

A coiled-coil region spans residues 248–268 (ISKYKEVQEGLRNQQEVIKEL).

It belongs to the BshC family.

Functionally, involved in bacillithiol (BSH) biosynthesis. May catalyze the last step of the pathway, the addition of cysteine to glucosamine malate (GlcN-Mal) to generate BSH. The polypeptide is Putative cysteine ligase BshC (Bacillus cereus (strain G9842)).